A 107-amino-acid polypeptide reads, in one-letter code: 4-carboxymethyl-4-methylbutenolide mutase (107 aa).

His-26 serves as the catalytic Proton donor/acceptor. Positions 26 and 39 each coordinate 3-methylmuconolactone. Residues His-26 and Tyr-39 each contribute to the 4-methylmuconolactone site.

The protein belongs to the MmlI family. In terms of assembly, homodimer.

The enzyme catalyses 4-methylmuconolactone = 3-methylmuconolactone. Its activity is regulated as follows. Inhibited by p-chloromercuribenzoate. Isomerase involved in the degradation of 4-methylsalicylate and 5-methylsalicylate. Catalyzes the isomerization of the dead-end metabolite 4-methylmuconolactone (4-ML) to 3-methylmuconolactone (3-ML), which can then be further degraded through a modified 3-oxoadipate pathway. Can also use 1-methylbislactone but not 3-methyl-cis,cis-muconate. The polypeptide is 4-carboxymethyl-4-methylbutenolide mutase (Pseudomonas reinekei).